We begin with the raw amino-acid sequence, 100 residues long: Small ribosomal subunit protein uS14c (100 aa).

This sequence belongs to the universal ribosomal protein uS14 family. As to quaternary structure, part of the 30S ribosomal subunit.

The protein resides in the plastid. In terms of biological role, binds 16S rRNA, required for the assembly of 30S particles. This chain is Small ribosomal subunit protein uS14c, found in Cuscuta obtusiflora (Peruvian dodder).